A 173-amino-acid polypeptide reads, in one-letter code: PTS system glucose-specific EIIA component (173 aa).

Residues 40-144 (DPTFAQKMMG…STVTPVVVTN (105 aa)) enclose the PTS EIIA type-1 domain. Residues H77 and H92 each coordinate Zn(2+). The active-site Tele-phosphohistidine intermediate; for EIIA activity is the H92. The residue at position 92 (H92) is a Phosphohistidine; by HPr.

Heterodimer with glycerol kinase (glpk). Zn(2+) serves as cofactor.

Its subcellular location is the cytoplasm. Its function is as follows. The phosphoenolpyruvate-dependent sugar phosphotransferase system (sugar PTS), a major carbohydrate active transport system, catalyzes the phosphorylation of incoming sugar substrates concomitantly with their translocation across the cell membrane. The enzyme II complex composed of PtsG and Crr is involved in glucose transport. The polypeptide is PTS system glucose-specific EIIA component (crr) (Halalkalibacterium halodurans (strain ATCC BAA-125 / DSM 18197 / FERM 7344 / JCM 9153 / C-125) (Bacillus halodurans)).